The sequence spans 138 residues: ATP synthase epsilon chain (138 aa).

Belongs to the ATPase epsilon chain family. In terms of assembly, F-type ATPases have 2 components, CF(1) - the catalytic core - and CF(0) - the membrane proton channel. CF(1) has five subunits: alpha(3), beta(3), gamma(1), delta(1), epsilon(1). CF(0) has three main subunits: a, b and c.

The protein localises to the cell inner membrane. Produces ATP from ADP in the presence of a proton gradient across the membrane. This is ATP synthase epsilon chain from Methylibium petroleiphilum (strain ATCC BAA-1232 / LMG 22953 / PM1).